The following is a 258-amino-acid chain: Proteasome subunit beta type-1 (258 aa).

Belongs to the peptidase T1B family. As to quaternary structure, the 26S proteasome consists of a 20S proteasome core and two 19S regulatory subunits. The 20S proteasome core is composed of 28 subunits that are arranged in four stacked rings, resulting in a barrel-shaped structure. The two end rings are each formed by seven alpha subunits, and the two central rings are each formed by seven beta subunits. The catalytic chamber with the active sites is on the inside of the barrel.

It localises to the cytoplasm. It is found in the nucleus. Non-catalytic component of the proteasome, a multicatalytic proteinase complex which is characterized by its ability to cleave peptides with Arg, Phe, Tyr, Leu, and Glu adjacent to the leaving group at neutral or slightly basic pH. The proteasome has an ATP-dependent proteolytic activity. This Caenorhabditis elegans protein is Proteasome subunit beta type-1 (pbs-6).